The sequence spans 265 residues: Homeobox protein engrailed-2-A (265 aa).

Composition is skewed to basic and acidic residues over residues 1-12 (MEENEQNNREVE) and 102-115 (GEKKSDLAMEETLK). Disordered stretches follow at residues 1–38 (MEENEQNNREVEPQQESGEESNRGILHQAPPGNHQPHH), 75–140 (LSGA…KATQ), and 156–181 (DRPSSGPRSRKPKKKSVSKEDKRPRT). Positions 122–136 (DHSLSSDSDSSQTSS) are enriched in low complexity. The homeobox DNA-binding region spans 176–235 (DKRPRTAFTADQLQRLKAEFQTNRYLTEQRRQSLAQELSLNESQIKIWFQNKRAKIKKAT).

The protein belongs to the engrailed homeobox family.

It localises to the nucleus. The protein is Homeobox protein engrailed-2-A (en2-a) of Xenopus laevis (African clawed frog).